Here is a 452-residue protein sequence, read N- to C-terminus: Bifunctional protein GlmU (452 aa).

The segment at 1 to 226 is pyrophosphorylase; the sequence is MSLTTVILAA…PMEVEGANNR (226 aa). UDP-N-acetyl-alpha-D-glucosamine-binding positions include 8-11, Lys-22, Gln-73, 78-79, 100-102, Gly-137, Glu-151, Asn-166, and Asn-224; these read LAAG, GT, and YGD. Residue Asp-102 participates in Mg(2+) binding. A Mg(2+)-binding site is contributed by Asn-224. Residues 227-247 form a linker region; that stretch reads IQLAGLERAYQAWQAQELMLN. The tract at residues 248–452 is N-acetyltransferase; that stretch reads GATLADPARI…LDGWKRPVKK (205 aa). 2 residues coordinate UDP-N-acetyl-alpha-D-glucosamine: Arg-330 and Lys-348. The active-site Proton acceptor is His-360. Positions 363 and 374 each coordinate UDP-N-acetyl-alpha-D-glucosamine. Residues Ala-377, 383–384, Ser-402, Ala-420, and Arg-437 each bind acetyl-CoA; that span reads NY.

It in the N-terminal section; belongs to the N-acetylglucosamine-1-phosphate uridyltransferase family. The protein in the C-terminal section; belongs to the transferase hexapeptide repeat family. As to quaternary structure, homotrimer. Mg(2+) serves as cofactor.

Its subcellular location is the cytoplasm. It catalyses the reaction alpha-D-glucosamine 1-phosphate + acetyl-CoA = N-acetyl-alpha-D-glucosamine 1-phosphate + CoA + H(+). The catalysed reaction is N-acetyl-alpha-D-glucosamine 1-phosphate + UTP + H(+) = UDP-N-acetyl-alpha-D-glucosamine + diphosphate. It participates in nucleotide-sugar biosynthesis; UDP-N-acetyl-alpha-D-glucosamine biosynthesis; N-acetyl-alpha-D-glucosamine 1-phosphate from alpha-D-glucosamine 6-phosphate (route II): step 2/2. The protein operates within nucleotide-sugar biosynthesis; UDP-N-acetyl-alpha-D-glucosamine biosynthesis; UDP-N-acetyl-alpha-D-glucosamine from N-acetyl-alpha-D-glucosamine 1-phosphate: step 1/1. It functions in the pathway bacterial outer membrane biogenesis; LPS lipid A biosynthesis. Functionally, catalyzes the last two sequential reactions in the de novo biosynthetic pathway for UDP-N-acetylglucosamine (UDP-GlcNAc). The C-terminal domain catalyzes the transfer of acetyl group from acetyl coenzyme A to glucosamine-1-phosphate (GlcN-1-P) to produce N-acetylglucosamine-1-phosphate (GlcNAc-1-P), which is converted into UDP-GlcNAc by the transfer of uridine 5-monophosphate (from uridine 5-triphosphate), a reaction catalyzed by the N-terminal domain. The polypeptide is Bifunctional protein GlmU (Pseudoalteromonas translucida (strain TAC 125)).